The sequence spans 339 residues: Glyceraldehyde-3-phosphate dehydrogenase (339 aa).

NAD(+) is bound by residues 12 to 13 (RI), D39, R84, and S127. D-glyceraldehyde 3-phosphate is bound by residues 157–159 (SCT), T188, R203, 216–217 (TG), and R239. Catalysis depends on C158, which acts as the Nucleophile. N320 contacts NAD(+).

The protein belongs to the glyceraldehyde-3-phosphate dehydrogenase family. In terms of assembly, homotetramer.

The protein resides in the cytoplasm. The catalysed reaction is D-glyceraldehyde 3-phosphate + phosphate + NAD(+) = (2R)-3-phospho-glyceroyl phosphate + NADH + H(+). It participates in carbohydrate degradation; glycolysis; pyruvate from D-glyceraldehyde 3-phosphate: step 1/5. Catalyzes the oxidative phosphorylation of glyceraldehyde 3-phosphate (G3P) to 1,3-bisphosphoglycerate (BPG) using the cofactor NAD. The first reaction step involves the formation of a hemiacetal intermediate between G3P and a cysteine residue, and this hemiacetal intermediate is then oxidized to a thioester, with concomitant reduction of NAD to NADH. The reduced NADH is then exchanged with the second NAD, and the thioester is attacked by a nucleophilic inorganic phosphate to produce BPG. This Mycobacterium bovis (strain ATCC BAA-935 / AF2122/97) protein is Glyceraldehyde-3-phosphate dehydrogenase (gap).